The following is a 360-amino-acid chain: Ferredoxin--NADP reductase (360 aa).

FAD contacts are provided by Thr-25, Glu-44, Gln-52, Tyr-57, Val-97, Phe-132, Asp-298, and Ser-339.

The protein belongs to the ferredoxin--NADP reductase type 2 family. As to quaternary structure, homodimer. FAD is required as a cofactor.

The catalysed reaction is 2 reduced [2Fe-2S]-[ferredoxin] + NADP(+) + H(+) = 2 oxidized [2Fe-2S]-[ferredoxin] + NADPH. This Chlorobaculum tepidum (strain ATCC 49652 / DSM 12025 / NBRC 103806 / TLS) (Chlorobium tepidum) protein is Ferredoxin--NADP reductase.